We begin with the raw amino-acid sequence, 709 residues long: Zinc finger CCHC domain-containing protein 8 (709 aa).

The tract at residues 1–47 (MAAGVDFGDLELFEAFDPPEESTPKPVHTRFKDDEEEEDDDDDENGV) is disordered. Residue alanine 2 is modified to N-acetylalanine. Acidic residues-rich tracts occupy residues 8 to 20 (GDLE…DPPE) and 34 to 46 (DEEE…DENG). Positions 48–83 (GDAELQEQLRRCEATIEQLRAENQELKRKLNILTRP) form a coiled coil. A CCHC-type zinc finger spans residues 230–247 (PHCFNCGSEEHQMKECPM). RBM7 binding stretches follow at residues 289 to 302 (FKPG…QDAL) and 312 to 327 (FIYR…GWLK). Disordered regions lie at residues 409 to 518 (IQSP…EDAL) and 533 to 667 (ALQQ…DMSK). The segment covering 410-430 (QSPSMRSSGKRSSSQSSPNSP) has biased composition (low complexity). The span at 468-499 (PPLPPGTPPPLPQGTPPPLFTPPLPKGTPPLT) shows a compositional bias: pro residues. Phosphothreonine is present on residues threonine 474, threonine 482, threonine 488, and threonine 495. Over residues 552-562 (LTGNSVASSPC) the composition is skewed to polar residues. A Phosphoserine modification is found at serine 601. Polar residues predominate over residues 635–645 (MNMSNGSNQQP). Phosphoserine is present on residues serine 660 and serine 697. Positions 661-709 (PVPDMSKFATGITPFEFENMAESTGMYLRIRNLLKNSPRNQQKNKKTCE) are MTREX binding.

It belongs to the ZCCHC8 family. In terms of assembly, component of a nuclear TRAMP-like complex, an ATP-dependent exosome regulatory complex consisting of a helicase (MTREX), an oligadenylate polymerase (TENT4B or TENT4A), and a substrate specific RNA-binding factor (ZCCHC7 or ZCCHC8). Several TRAMP-like complexes exist with specific compositions and are associated with nuclear, or nucleolar RNA exosomes. Identified in the spliceosome C complex. Component of the nuclear exosome targeting (NEXT) complex composed of MTREX, ZCCHC8, and RBM7 that directs a subset of non-coding short-lived RNAs for exosomal degradation. Interacts with proteins involved in RNA processing and degradation such as MTREX and RBM7; interaction with MTREX enhances MTREX RNA helicase activity and bridges between RBM7 and MTREX. Interacts with TERC, the telomerase RNA component. Post-translationally, phosphorylation at Thr-495 by GSK3 is triggered in cells entering mitosis.

It is found in the nucleus. It localises to the nucleoplasm. Scaffolding subunit of the trimeric nuclear exosome targeting (NEXT) complex that is involved in the surveillance and turnover of aberrant transcripts and non-coding RNAs. NEXT functions as an RNA exosome cofactor that directs a subset of non-coding short-lived RNAs for exosomal degradation. May be involved in pre-mRNA splicing. It is required for 3'-end maturation of telomerase RNA component (TERC), TERC 3'-end targeting to the nuclear RNA exosome, and for telomerase function. The polypeptide is Zinc finger CCHC domain-containing protein 8 (Zcchc8) (Mus musculus (Mouse)).